A 327-amino-acid polypeptide reads, in one-letter code: Dolichyl-phosphate beta-glucosyltransferase (327 aa).

At 1–15 the chain is on the lumenal side; it reads MIDLFINIASFTIYG. Residues 16–36 form a helical membrane-spanning segment; it reads IPVIPLFIIVFVILSYYLLLL. Residues 37-327 lie on the Cytoplasmic side of the membrane; that stretch reads HDESPLWLEK…YLLGIWKIKS (291 aa).

Belongs to the glycosyltransferase 2 family.

It is found in the endoplasmic reticulum membrane. The enzyme catalyses a di-trans,poly-cis-dolichyl phosphate + UDP-alpha-D-glucose = a di-trans,poly-cis-dolichyl beta-D-glucosyl phosphate + UDP. Its pathway is protein modification; protein glycosylation. Endoplasmic reticulum membrane-bound UDP-glucose:dolichyl-phosphate glucosyltransferase involved in protein N-linked glycosylation. This is Dolichyl-phosphate beta-glucosyltransferase (alg5) from Dictyostelium discoideum (Social amoeba).